Here is a 502-residue protein sequence, read N- to C-terminus: T-complex protein 11-like X-linked protein 2 (502 aa).

A disordered region spans residues M1–C36.

The protein belongs to the TCP11 family.

This is T-complex protein 11-like X-linked protein 2 from Homo sapiens (Human).